The primary structure comprises 225 residues: Receptor-transporting protein 2 (225 aa).

Over 1-196 (MCTSLTTCEW…RAQAGSGYNF (196 aa)) the chain is Cytoplasmic. Residues 52-161 (ASGRFHCSWC…AEFCEACQEG (110 aa)) form a 3CxxC-type zinc finger. Residues 197 to 219 (LSLRWCLFWASLCLLVVYLQFSF) form a helical membrane-spanning segment. Residues 220–225 (LSPAFF) are Extracellular-facing.

It belongs to the TMEM7 family. As to quaternary structure, interacts with olfactory receptors. In terms of tissue distribution, expressed in circumvallate papillae and testis.

The protein localises to the cell membrane. Its function is as follows. Specifically promotes functional cell surface expression of olfactory receptors, but not of other GPCRs. In Homo sapiens (Human), this protein is Receptor-transporting protein 2 (RTP2).